A 310-amino-acid polypeptide reads, in one-letter code: MNNQTFITQFLLLGLPIPEEHQHLFYALFLVMYLTTILGNLLIIVLVQLDSQLHTPMYLFLSNLSFSDLCFSSVTMPKLLQNMRSQDTSIPYGGCLAQTYFFMVFGDMESFLLVAMAYDRYVAICFPLHYTSIMSPKLCTCLVLLLWMLTTSHAMMHTLLAARLSFCENNVVLNFFCDLFVLLKLACSDTYINELMIFIMSTLLIIIPFFLIVMSYARIISSILKVPSTQGICKVFSTCGSHLSVVSLFYGTIIGLYLCPAGNNSTVKEMVMAMMYTVVTPMLNPFIYSLRNRDMKRALIRVICSMKITL.

At Met1–His23 the chain is on the extracellular side. Asn3 is a glycosylation site (N-linked (GlcNAc...) asparagine). The chain crosses the membrane as a helical span at residues Leu24 to Gln48. Over Leu49–Thr55 the chain is Cytoplasmic. The helical transmembrane segment at Pro56 to Pro77 threads the bilayer. At Lys78–Gln98 the chain is on the extracellular side. Cys95 and Cys187 are disulfide-bonded. Residues Thr99–Tyr118 form a helical membrane-spanning segment. Over Asp119 to Lys137 the chain is Cytoplasmic. Residues Leu138–Met156 form a helical membrane-spanning segment. Residues His157–Glu194 are Extracellular-facing. Residues Leu195 to Ala217 form a helical membrane-spanning segment. At Arg218–Lys234 the chain is on the cytoplasmic side. Residues Val235 to Leu258 traverse the membrane as a helical segment. At Cys259–Met270 the chain is on the extracellular side. The helical transmembrane segment at Val271 to Leu290 threads the bilayer. The Cytoplasmic segment spans residues Arg291 to Leu310.

Belongs to the G-protein coupled receptor 1 family. In terms of tissue distribution, olfactory epithelium.

The protein resides in the cell membrane. Functionally, odorant receptor. This chain is Olfactory receptor 1496 (Olr1496), found in Rattus norvegicus (Rat).